The sequence spans 360 residues: Phospho-N-acetylmuramoyl-pentapeptide-transferase (360 aa).

The next 10 membrane-spanning stretches (helical) occupy residues 27 to 47, 71 to 91, 94 to 114, 132 to 152, 168 to 188, 199 to 219, 236 to 256, 263 to 283, 288 to 308, and 338 to 358; these read IVSL…MIAF, TPTM…LLWV, NNPY…VGFV, WKYF…YSFG, VMPQ…VGTS, GLAI…AWAT, AGEL…FLWF, VFMG…IAVL, FLLV…ILQV, and VIVR…ATLK.

It belongs to the glycosyltransferase 4 family. MraY subfamily. Requires Mg(2+) as cofactor.

It is found in the cell inner membrane. It carries out the reaction UDP-N-acetyl-alpha-D-muramoyl-L-alanyl-gamma-D-glutamyl-meso-2,6-diaminopimeloyl-D-alanyl-D-alanine + di-trans,octa-cis-undecaprenyl phosphate = di-trans,octa-cis-undecaprenyl diphospho-N-acetyl-alpha-D-muramoyl-L-alanyl-D-glutamyl-meso-2,6-diaminopimeloyl-D-alanyl-D-alanine + UMP. It participates in cell wall biogenesis; peptidoglycan biosynthesis. Catalyzes the initial step of the lipid cycle reactions in the biosynthesis of the cell wall peptidoglycan: transfers peptidoglycan precursor phospho-MurNAc-pentapeptide from UDP-MurNAc-pentapeptide onto the lipid carrier undecaprenyl phosphate, yielding undecaprenyl-pyrophosphoryl-MurNAc-pentapeptide, known as lipid I. The polypeptide is Phospho-N-acetylmuramoyl-pentapeptide-transferase (Photorhabdus laumondii subsp. laumondii (strain DSM 15139 / CIP 105565 / TT01) (Photorhabdus luminescens subsp. laumondii)).